A 477-amino-acid polypeptide reads, in one-letter code: Aspartyl/glutamyl-tRNA(Asn/Gln) amidotransferase subunit B (477 aa).

The protein belongs to the GatB/GatE family. GatB subfamily. Heterotrimer of A, B and C subunits.

It carries out the reaction L-glutamyl-tRNA(Gln) + L-glutamine + ATP + H2O = L-glutaminyl-tRNA(Gln) + L-glutamate + ADP + phosphate + H(+). The enzyme catalyses L-aspartyl-tRNA(Asn) + L-glutamine + ATP + H2O = L-asparaginyl-tRNA(Asn) + L-glutamate + ADP + phosphate + 2 H(+). In terms of biological role, allows the formation of correctly charged Asn-tRNA(Asn) or Gln-tRNA(Gln) through the transamidation of misacylated Asp-tRNA(Asn) or Glu-tRNA(Gln) in organisms which lack either or both of asparaginyl-tRNA or glutaminyl-tRNA synthetases. The reaction takes place in the presence of glutamine and ATP through an activated phospho-Asp-tRNA(Asn) or phospho-Glu-tRNA(Gln). This Lactococcus lactis subsp. cremoris (strain SK11) protein is Aspartyl/glutamyl-tRNA(Asn/Gln) amidotransferase subunit B.